A 266-amino-acid polypeptide reads, in one-letter code: MRLIPLTSAEQVGKWAARHIVNRINAFKPTADRPFVLGLPTGGTPLTAYKALVEMHKAGQVSFKHVVTFNMDEYVGLPKEHPESYHSFMHRNFFDHVDIPAENINLLNGNAPDIDAECRNYEEKIRSYGKIHLFMGGVGNDGHIAFNEPASSLASRTRIKTLTHDTRVANSRFFDGDVNQVPKYALTVGVGTLLDAEEVMILVLGHQKAQALQAAVEGNVNHMWTISCLQLHPKAVVVCDEPSTMELKVKTLKYFNELEAENIKGL.

Aspartate 72 serves as the catalytic Proton acceptor; for enolization step. Aspartate 141 acts as the For ring-opening step in catalysis. Histidine 143 acts as the Proton acceptor; for ring-opening step in catalysis. Glutamate 148 (for ring-opening step) is an active-site residue.

This sequence belongs to the glucosamine/galactosamine-6-phosphate isomerase family. NagB subfamily. In terms of assembly, homohexamer.

The enzyme catalyses alpha-D-glucosamine 6-phosphate + H2O = beta-D-fructose 6-phosphate + NH4(+). It participates in amino-sugar metabolism; N-acetylneuraminate degradation; D-fructose 6-phosphate from N-acetylneuraminate: step 5/5. Allosterically activated by N-acetylglucosamine 6-phosphate (GlcNAc6P). In terms of biological role, catalyzes the reversible isomerization-deamination of glucosamine 6-phosphate (GlcN6P) to form fructose 6-phosphate (Fru6P) and ammonium ion. The chain is Glucosamine-6-phosphate deaminase from Citrobacter koseri (strain ATCC BAA-895 / CDC 4225-83 / SGSC4696).